The sequence spans 347 residues: UDP-3-O-acylglucosamine N-acyltransferase (347 aa).

H248 acts as the Proton acceptor in catalysis.

It belongs to the transferase hexapeptide repeat family. LpxD subfamily. Homotrimer.

It catalyses the reaction a UDP-3-O-[(3R)-3-hydroxyacyl]-alpha-D-glucosamine + a (3R)-hydroxyacyl-[ACP] = a UDP-2-N,3-O-bis[(3R)-3-hydroxyacyl]-alpha-D-glucosamine + holo-[ACP] + H(+). The protein operates within bacterial outer membrane biogenesis; LPS lipid A biosynthesis. In terms of biological role, catalyzes the N-acylation of UDP-3-O-acylglucosamine using 3-hydroxyacyl-ACP as the acyl donor. Is involved in the biosynthesis of lipid A, a phosphorylated glycolipid that anchors the lipopolysaccharide to the outer membrane of the cell. This Parasynechococcus marenigrum (strain WH8102) protein is UDP-3-O-acylglucosamine N-acyltransferase.